We begin with the raw amino-acid sequence, 502 residues long: UPF0371 protein CLK_3516 (502 aa).

The protein belongs to the UPF0371 family.

This Clostridium botulinum (strain Loch Maree / Type A3) protein is UPF0371 protein CLK_3516.